The chain runs to 191 residues: Ion-translocating oxidoreductase complex subunit B (191 aa).

Residues 1–26 (MSAIWIAIAVLSALSLVFGGLLGYAS) are hydrophobic. Positions 32 to 91 (EEDPIVEQIDAILPQSQCGQCGYPGCRPYADAVGNNGEMINKCAPGGEQTMLKLAALLNV) constitute a 4Fe-4S domain. The [4Fe-4S] cluster site is built by Cys-49, Cys-52, Cys-57, Cys-74, Cys-116, Cys-119, Cys-122, Cys-126, Cys-146, Cys-149, Cys-152, and Cys-156. 2 consecutive 4Fe-4S ferredoxin-type domains span residues 107–136 (KVAW…GATR) and 137–166 (AMHT…MRPV).

It belongs to the 4Fe4S bacterial-type ferredoxin family. RnfB subfamily. In terms of assembly, the complex is composed of six subunits: RnfA, RnfB, RnfC, RnfD, RnfE and RnfG. [4Fe-4S] cluster is required as a cofactor.

It is found in the cell inner membrane. In terms of biological role, part of a membrane-bound complex that couples electron transfer with translocation of ions across the membrane. The protein is Ion-translocating oxidoreductase complex subunit B of Erwinia tasmaniensis (strain DSM 17950 / CFBP 7177 / CIP 109463 / NCPPB 4357 / Et1/99).